The chain runs to 698 residues: Elongation factor G (698 aa).

The tr-type G domain occupies 10-285 (AATRNIGIMA…AVVDFLPSPT (276 aa)). Residues 19 to 26 (AHIDAGKT), 83 to 87 (DTPGH), and 137 to 140 (NKMD) contribute to the GTP site.

This sequence belongs to the TRAFAC class translation factor GTPase superfamily. Classic translation factor GTPase family. EF-G/EF-2 subfamily.

It localises to the cytoplasm. In terms of biological role, catalyzes the GTP-dependent ribosomal translocation step during translation elongation. During this step, the ribosome changes from the pre-translocational (PRE) to the post-translocational (POST) state as the newly formed A-site-bound peptidyl-tRNA and P-site-bound deacylated tRNA move to the P and E sites, respectively. Catalyzes the coordinated movement of the two tRNA molecules, the mRNA and conformational changes in the ribosome. The polypeptide is Elongation factor G (Parafrankia sp. (strain EAN1pec)).